A 997-amino-acid polypeptide reads, in one-letter code: Protein translocase subunit SecA (997 aa).

ATP contacts are provided by residues glutamine 102, 120 to 124, and aspartate 521; that span reads GEGKT. The tract at residues 893–997 is disordered; the sequence is PADASPNGVV…KYKKCHGAEA (105 aa). Over residues 938 to 953 the composition is skewed to basic and acidic residues; that stretch reads AIEREFEKKKQQELSH. Positions 981, 983, 992, and 993 each coordinate Zn(2+). Over residues 987-997 the composition is skewed to basic residues; sequence KKYKKCHGAEA.

Belongs to the SecA family. In terms of assembly, monomer and homodimer. Part of the essential Sec protein translocation apparatus which comprises SecA, SecYEG and auxiliary proteins SecDF. Other proteins may also be involved. It depends on Zn(2+) as a cofactor.

The protein resides in the cell inner membrane. Its subcellular location is the cytoplasm. It carries out the reaction ATP + H2O + cellular proteinSide 1 = ADP + phosphate + cellular proteinSide 2.. Its function is as follows. Part of the Sec protein translocase complex. Interacts with the SecYEG preprotein conducting channel. Has a central role in coupling the hydrolysis of ATP to the transfer of proteins into and across the cell membrane, serving as an ATP-driven molecular motor driving the stepwise translocation of polypeptide chains across the membrane. In Acidobacterium capsulatum (strain ATCC 51196 / DSM 11244 / BCRC 80197 / JCM 7670 / NBRC 15755 / NCIMB 13165 / 161), this protein is Protein translocase subunit SecA.